Here is a 183-residue protein sequence, read N- to C-terminus: Dual-action ribosomal maturation protein DarP (183 aa).

Belongs to the DarP family.

It is found in the cytoplasm. In terms of biological role, member of a network of 50S ribosomal subunit biogenesis factors which assembles along the 30S-50S interface, preventing incorrect 23S rRNA structures from forming. Promotes peptidyl transferase center (PTC) maturation. The polypeptide is Dual-action ribosomal maturation protein DarP (Salmonella arizonae (strain ATCC BAA-731 / CDC346-86 / RSK2980)).